We begin with the raw amino-acid sequence, 673 residues long: Vasorin (673 aa).

Positions methionine 1–glycine 23 are cleaved as a signal peptide. Positions cysteine 24 to proline 51 constitute an LRRNT domain. The Extracellular segment spans residues cysteine 24–proline 575. 10 LRR repeats span residues proline 52 to glycine 74, glycine 77 to proline 98, asparagine 101 to glycine 122, arginine 125 to threonine 146, arginine 149 to arginine 170, leucine 171 to threonine 191, asparagine 193 to arginine 214, asparagine 217 to leucine 238, glycine 240 to glycine 262, and alanine 265 to phenylalanine 287. An N-linked (GlcNAc...) asparagine glycan is attached at asparagine 101. A glycan (N-linked (GlcNAc...) (complex) asparagine) is linked at asparagine 117. An N-linked (GlcNAc...) asparagine glycan is attached at asparagine 273. Positions asparagine 298 to alanine 351 constitute an LRRCT domain. Residues valine 358–alanine 370 are compositionally biased toward low complexity. A disordered region spans residues valine 358 to proline 404. A compositionally biased stretch (pro residues) spans proline 390–proline 404. The 38-residue stretch at glutamine 405–glutamate 442 folds into the EGF-like domain. Intrachain disulfides connect cysteine 409-cysteine 420, cysteine 414-cysteine 430, and cysteine 432-cysteine 441. The Fibronectin type-III domain maps to proline 460–alanine 558. N-linked (GlcNAc...) asparagine glycosylation is found at asparagine 500 and asparagine 528. The helical transmembrane segment at leucine 576–alanine 596 threads the bilayer. The Cytoplasmic segment spans residues tyrosine 597–isoleucine 673.

In terms of assembly, interacts with TGFB1, TGFB2 and TGFB3. N-glycosylated. N-glycan heterogeneity at Asn-117: Hex5HexNAc4 (minor), dHex1Hex5HexNAc4 (major), Hex6HexNAc5 (minor) and dHex1Hex6HexNAc5 (minor). As to expression, expressed at highest levels in aorta, at intermediate levels in kidney and placenta and at lowest levels in brain, heart, liver, lung and skeletal muscle. Within the aorta, the strongest expression is found in the tunica media of the proximal ascending aorta, the descending thoracic aorta, the abdominal aorta and the coronary arteries. Within the kidney, expression is found in the interstitial cells.

The protein localises to the membrane. It is found in the secreted. In terms of biological role, may act as an inhibitor of TGF-beta signaling. The polypeptide is Vasorin (VASN) (Homo sapiens (Human)).